The primary structure comprises 1006 residues: Probable beta-galactosidase A (1006 aa).

Residues 1–18 form the signal peptide; it reads MKLLSVCAVALLAAQAAG. Residues tyrosine 96, asparagine 140, alanine 141, and glutamate 142 each contribute to the substrate site. Residue asparagine 156 is glycosylated (N-linked (GlcNAc...) asparagine). Substrate is bound at residue asparagine 199. Residue glutamate 200 is the Proton donor of the active site. Residues cysteine 205 and cysteine 206 are joined by a disulfide bond. Asparagine 207 is a glycosylation site (N-linked (GlcNAc...) asparagine). Tyrosine 260 contributes to the substrate binding site. A disulfide bridge connects residues cysteine 266 and cysteine 315. Glutamate 298 acts as the Nucleophile in catalysis. Tyrosine 364 contacts substrate. 6 N-linked (GlcNAc...) asparagine glycosylation sites follow: asparagine 373, asparagine 402, asparagine 422, asparagine 622, asparagine 777, and asparagine 914.

It belongs to the glycosyl hydrolase 35 family.

The protein localises to the secreted. The catalysed reaction is Hydrolysis of terminal non-reducing beta-D-galactose residues in beta-D-galactosides.. Cleaves beta-linked terminal galactosyl residues from gangliosides, glycoproteins, and glycosaminoglycans. In Neosartorya fischeri (strain ATCC 1020 / DSM 3700 / CBS 544.65 / FGSC A1164 / JCM 1740 / NRRL 181 / WB 181) (Aspergillus fischerianus), this protein is Probable beta-galactosidase A (lacA).